The primary structure comprises 140 residues: MLQAADFIERTETAGELSRGLIGVLSSQISWCLLNVNLSKLPTRLQRLSCSVLNSSPAMRGGARGRPQLTLERPLRPGCRLHSCSEAEKGGFVRRKEIILFPPCEDPARGWLSANPGREPSPGICWHLNLGLPSLHNCEE.

In terms of tissue distribution, highly expressed in peripheral blood leukocytes, spleen, thymus, kidney, pancreas and lung.

This is Myelodysplastic syndrome 2 translocation-associated protein (MDS2) from Homo sapiens (Human).